A 104-amino-acid chain; its full sequence is Type VII secretion system extracellular protein B (104 aa).

Belongs to the WXG100 family. Homodimer. When mixed with EsxA does not form heterodimers.

It localises to the secreted. Its function is as follows. Virulence factor that is important for the establishment of infection in the host. EsxB is required for EsxA synthesis as well as secretion. Mediates together with EsxA the release of S.aureus from the host cell. Also inhibits host cytokine production and thus modulates dendritic cell-mediated immunity. The protein is Type VII secretion system extracellular protein B of Staphylococcus aureus (strain MSSA476).